The chain runs to 478 residues: Ribosome biogenesis protein NOP53 (478 aa).

Gly residues predominate over residues Met1–Gly10. A disordered region spans residues Met1–Leu51. Ala2 carries the N-acetylalanine modification. Position 29 is a phosphoserine (Ser29). The span at Arg35–Arg49 shows a compositional bias: basic residues. Phosphoserine occurs at positions 93 and 305. The segment at Lys148–Leu431 is mediates interaction with CDKN2A/isoform tumor suppressor ARF. The segment at Lys181 to Leu478 is mediates interaction with NF2. Positions Glu303 to Arg344 are disordered. Residues Thr333–Arg342 show a composition bias toward basic and acidic residues. The tract at residues Arg342–Ala386 is mediates interaction with human herpesvirus 8 protein ORF16. Nucleolar localization signal stretches follow at residues Ala347–Arg395 and Arg396–Leu478.

Belongs to the NOP53 family. In terms of assembly, homooligomer. Interacts with PTEN; regulates PTEN phosphorylation and increases its stability. Interacts with RPL11; retains RPL11 into the nucleolus. Interacts with CDKN2A/isoform tumor suppressor ARF; the interaction is direct and promotes ARF nucleoplasmic relocalization and ubiquitin-mediated proteasomal degradation. Interacts with NPM1; the interaction is direct and competitive with MYC. Interacts with NF2 (via FERM domain); the interaction is direct. Interacts with p53/TP53 (via the oligomerization region); the interaction is direct and may prevent the MDM2-mediated proteasomal degradation of p53/TP53. Interacts with RIGI; may regulate RIGI through USP15-mediated 'Lys-63'-linked deubiquitination. Interacts with UBTF. (Microbial infection) Interacts with herpes simplex virus 1 early proteins ICP22 and ICP0. As to quaternary structure, (Microbial infection) Interacts with Human herpesvirus 8 protein ORF16; may sequester ORF16 in host nucleolus and reduce its antiapoptotic activity. Ubiquitin-mediated proteasomal degradation is regulated by c-JUN. It is associated with relocalization to the nucleoplasm and decreased homooligomerization. Post-translationally, phosphorylated upon DNA damage probably by ATM and DNA-PK; may regulate NOP53 degradation. In terms of tissue distribution, expressed at high levels in heart and pancreas, moderate levels in placenta, liver, skeletal muscle, and kidney, and low levels in brain and lung.

Its subcellular location is the nucleus. The protein resides in the nucleolus. The protein localises to the nucleoplasm. In terms of biological role, nucleolar protein which is involved in the integration of the 5S RNP into the ribosomal large subunit during ribosome biogenesis. In ribosome biogenesis, may also play a role in rRNA transcription. Also functions as a nucleolar sensor that regulates the activation of p53/TP53 in response to ribosome biogenesis perturbation, DNA damage and other stress conditions. DNA damage or perturbation of ribosome biogenesis disrupt the interaction between NOP53 and RPL11 allowing RPL11 transport to the nucleoplasm where it can inhibit MDM2 and allow p53/TP53 activation. It may also positively regulate the function of p53/TP53 in cell cycle arrest and apoptosis through direct interaction, preventing its MDM2-dependent ubiquitin-mediated proteasomal degradation. Originally identified as a tumor suppressor, it may also play a role in cell proliferation and apoptosis by positively regulating the stability of PTEN, thereby antagonizing the PI3K-AKT/PKB signaling pathway. May also inhibit cell proliferation and increase apoptosis through its interaction with NF2. May negatively regulate NPM1 by regulating its nucleoplasmic localization, oligomerization and ubiquitin-mediated proteasomal degradation. Thereby, may prevent NPM1 interaction with MYC and negatively regulate transcription mediated by the MYC-NPM1 complex. May also regulate cellular aerobic respiration. In the cellular response to viral infection, may play a role in the attenuation of interferon-beta through the inhibition of RIGI. The sequence is that of Ribosome biogenesis protein NOP53 from Homo sapiens (Human).